The sequence spans 248 residues: Uridylate kinase (248 aa).

K11 to G14 provides a ligand contact to ATP. G53 is a UMP binding site. 2 residues coordinate ATP: G54 and R58. Residues D74 and A135–T142 contribute to the UMP site. ATP contacts are provided by T162, Y169, and D172.

Belongs to the UMP kinase family. Homohexamer.

It localises to the cytoplasm. It carries out the reaction UMP + ATP = UDP + ADP. Its pathway is pyrimidine metabolism; CTP biosynthesis via de novo pathway; UDP from UMP (UMPK route): step 1/1. Its activity is regulated as follows. Inhibited by UTP. In terms of biological role, catalyzes the reversible phosphorylation of UMP to UDP. This is Uridylate kinase from Chlamydia pneumoniae (Chlamydophila pneumoniae).